A 351-amino-acid chain; its full sequence is Bifunctional UDP-glucose 4-epimerase and UDP-xylose 4-epimerase 3 (351 aa).

Position 8 to 39 (8 to 39 (NILVTGGAGFIGTHTVVQLLNQGFKVTIIDNL)) interacts with NAD(+). Residue Ser-134 participates in substrate binding. Tyr-158 acts as the Proton acceptor in catalysis.

This sequence belongs to the NAD(P)-dependent epimerase/dehydratase family. Homodimer. Heterodimer. NAD(+) serves as cofactor. As to expression, ubiquitous.

It catalyses the reaction UDP-alpha-D-glucose = UDP-alpha-D-galactose. It carries out the reaction UDP-beta-L-arabinopyranose = UDP-alpha-D-xylose. It participates in carbohydrate metabolism; galactose metabolism. Its pathway is nucleotide-sugar biosynthesis; UDP-L-arabinose biosynthesis; UDP-L-arabinose from UDP-alpha-D-xylose: step 1/1. It functions in the pathway cell wall biogenesis; cell wall polysaccharide biosynthesis. With respect to regulation, strongly inhibited by UDP. Catalyzes the interconversion between UDP-glucose and UDP-galactose and the interconversion between UDP-arabinose and UDP-xylose. Cooperates with UGE2 in pollen development. May preferentially act in the UDP-galactose to UDP-glucose direction, therefore displaying a role in carbohydrate catabolism. This Arabidopsis thaliana (Mouse-ear cress) protein is Bifunctional UDP-glucose 4-epimerase and UDP-xylose 4-epimerase 3 (UGE3).